The primary structure comprises 596 residues: MADAEASAELPEEARPDGGTLRVLRDMASRLRIHSIRATCSTSSGHPTSCSSSAEIMSVLFFYIMRYKQSDPENPDNDRFVLAKRLSFVDVATGWLGQGLGVACGMAYTGKYFDRASYRVFCLMSDGESSEGSVWEAMAFASYYSLDNLVAIFDVNRLGHSGALPAEHCIDIYQRRCEAFGWNTYVVDGRDVEALCQVFWQASQVKHKPTAVVAKTFKGRGTPSIEDAESWHGKPMPRERADAIIKLIESQIETSRNLDPQLPIEDSPEVNITDVRMTSPPDYRVGDKIATRKACGLALAKLGYANDRVIVLDGDTKYSTFSEIFNKEYPERFIECFMAEQNMVSVALGCASRGRTIAFASTFAAFLTRAFDQIRIGGLSESNINIIGSHCGVSVGEDGASQMALEDIAMFRTIPKCTIFYPTDAVSTEHAVSLAANAKGMCFIRTTRPETMVIYTPQERFEIGQAKVLRHCVSDKVTVIGAGITVYEALAAADELLKQDIFIRVIDLFTIKPLDVTTIISSAKATEGRIITVEDHYPQGGIGEAVCAAVSMDPDIQVHSLAVSGVPQSGKSEELLDMYGISARHIIVAVKCMLLN.

His-46 is a binding site for substrate. Thiamine diphosphate-binding positions include Ser-49 and 94–96 (GWL). Residue Asp-126 participates in Mg(2+) binding. Thiamine diphosphate is bound by residues Gly-127 and Asn-156. The Mg(2+) site is built by Asn-156 and Leu-158. Residues Lys-218 and His-232 each contribute to the thiamine diphosphate site. Substrate-binding residues include His-232, Arg-292, and Ser-319. Positions 340 and 366 each coordinate thiamine diphosphate. Glu-340 serves as the catalytic Proton donor. Substrate contacts are provided by His-390 and Asp-398. Gln-402 provides a ligand contact to thiamine diphosphate. Position 448 (Arg-448) interacts with substrate.

This sequence belongs to the transketolase family. In terms of assembly, homodimer. Mg(2+) is required as a cofactor. It depends on Ca(2+) as a cofactor. Requires Mn(2+) as cofactor. The cofactor is Co(2+). Thiamine diphosphate serves as cofactor.

It is found in the cytoplasm. It catalyses the reaction D-sedoheptulose 7-phosphate + D-glyceraldehyde 3-phosphate = aldehydo-D-ribose 5-phosphate + D-xylulose 5-phosphate. Its function is as follows. Catalyzes the transfer of a two-carbon ketol group from a ketose donor to an aldose acceptor, via a covalent intermediate with the cofactor thiamine pyrophosphate. This chain is Transketolase-like protein 1 (TKTL1), found in Macaca fascicularis (Crab-eating macaque).